Here is a 323-residue protein sequence, read N- to C-terminus: Serine acetyltransferase 2 (323 aa).

The interval 302-323 is disordered; the sequence is AQSNGPSLSAGDTEKGHTNSTS. A compositionally biased stretch (basic and acidic residues) spans 313–323; sequence DTEKGHTNSTS.

This sequence belongs to the transferase hexapeptide repeat family. As to quaternary structure, homomultimer. Ubiquitously expressed at low levels. Localized in vascular tissues, particularly in phloem.

It is found in the cytoplasm. It carries out the reaction L-serine + acetyl-CoA = O-acetyl-L-serine + CoA. Its pathway is amino-acid biosynthesis; L-cysteine biosynthesis; L-cysteine from L-serine: step 1/2. The protein is Serine acetyltransferase 2 of Arabidopsis thaliana (Mouse-ear cress).